Consider the following 688-residue polypeptide: Probable transcription factor gsfR1 (688 aa).

Residues 1-16 (MSDGPETAEGDTDDAV) show a composition bias toward acidic residues. Residues 1 to 95 (MSDGPETAEG…TPVSSRGSIA (95 aa)) form a disordered region. A compositionally biased stretch (polar residues) spans 24–36 (RVASESSARSQPR). Residues 58 to 75 (EHSKEKNVSRRLPTEKTP) are compositionally biased toward basic and acidic residues.

It localises to the nucleus. Probable transcription factor that regulates expression of the gene cluster that mediates the biosynthesis of Griseofulvin, an important antifungal drug that has been in use for a long time for treating dermatophyte infections. The sequence is that of Probable transcription factor gsfR1 from Penicillium aethiopicum.